The sequence spans 447 residues: ATP-dependent protease ATPase subunit HslU (447 aa).

ATP contacts are provided by residues isoleucine 17, 59-64, aspartate 256, glutamate 321, and arginine 393; that span reads GVGKTE.

It belongs to the ClpX chaperone family. HslU subfamily. As to quaternary structure, a double ring-shaped homohexamer of HslV is capped on each side by a ring-shaped HslU homohexamer. The assembly of the HslU/HslV complex is dependent on binding of ATP.

It localises to the cytoplasm. Functionally, ATPase subunit of a proteasome-like degradation complex; this subunit has chaperone activity. The binding of ATP and its subsequent hydrolysis by HslU are essential for unfolding of protein substrates subsequently hydrolyzed by HslV. HslU recognizes the N-terminal part of its protein substrates and unfolds these before they are guided to HslV for hydrolysis. This chain is ATP-dependent protease ATPase subunit HslU, found in Pseudomonas putida (strain W619).